The chain runs to 136 residues: MLQPKRTKFRKVHKGRNRGIAGGTEVSFGSFGLKAIGRGRLTARQIEAARRAMSRAVKRQGKIWIRVFPDKPITEKPLEVRMGKGKGNVEYWVALIQPGKVLYEMDGVSEEVARNAFALAAAKLPFKTTFVTKTVM.

The protein belongs to the universal ribosomal protein uL16 family. In terms of assembly, part of the 50S ribosomal subunit.

Its function is as follows. Binds 23S rRNA and is also seen to make contacts with the A and possibly P site tRNAs. This chain is Large ribosomal subunit protein uL16, found in Glaesserella parasuis serovar 5 (strain SH0165) (Haemophilus parasuis).